Reading from the N-terminus, the 215-residue chain is Phosphatidylserine decarboxylase proenzyme (215 aa).

The active-site Schiff-base intermediate with substrate; via pyruvic acid is Ser-183. Ser-183 carries the pyruvic acid (Ser); by autocatalysis modification.

Belongs to the phosphatidylserine decarboxylase family. PSD-A subfamily. Heterodimer of a large membrane-associated beta subunit and a small pyruvoyl-containing alpha subunit. It depends on pyruvate as a cofactor. Is synthesized initially as an inactive proenzyme. Formation of the active enzyme involves a self-maturation process in which the active site pyruvoyl group is generated from an internal serine residue via an autocatalytic post-translational modification. Two non-identical subunits are generated from the proenzyme in this reaction, and the pyruvate is formed at the N-terminus of the alpha chain, which is derived from the carboxyl end of the proenzyme. The post-translation cleavage follows an unusual pathway, termed non-hydrolytic serinolysis, in which the side chain hydroxyl group of the serine supplies its oxygen atom to form the C-terminus of the beta chain, while the remainder of the serine residue undergoes an oxidative deamination to produce ammonia and the pyruvoyl prosthetic group on the alpha chain.

It localises to the cell membrane. It carries out the reaction a 1,2-diacyl-sn-glycero-3-phospho-L-serine + H(+) = a 1,2-diacyl-sn-glycero-3-phosphoethanolamine + CO2. Its pathway is phospholipid metabolism; phosphatidylethanolamine biosynthesis; phosphatidylethanolamine from CDP-diacylglycerol: step 2/2. Its function is as follows. Catalyzes the formation of phosphatidylethanolamine (PtdEtn) from phosphatidylserine (PtdSer). The chain is Phosphatidylserine decarboxylase proenzyme from Symbiobacterium thermophilum (strain DSM 24528 / JCM 14929 / IAM 14863 / T).